Consider the following 856-residue polypeptide: Inactive rhomboid protein 1 (856 aa).

The segment at 1–20 (MSEARRDSTSSLQRKKPPWL) is disordered. Over 1–412 (MSEARRDSTS…HRPFFTYWLT (412 aa)) the chain is Cytoplasmic. Ser-76 and Ser-176 each carry phosphoserine. Residues Thr-180 and Thr-183 each carry the phosphothreonine modification. Ser-391 carries the phosphoserine modification. Residues 413–433 (FVHSLVTILAVCIYGIAPVGF) form a helical membrane-spanning segment. Over 434–656 (SQHETVDSVL…NPEVPDQFYR (223 aa)) the chain is Lumenal. N-linked (GlcNAc...) asparagine glycosylation is present at Asn-584. Residues 657 to 677 (LWLSLFLHAGILHCLVSVCFQ) traverse the membrane as a helical segment. Over 678 to 692 (MTVLRDLEKLAGWHR) the chain is Cytoplasmic. Residues 693-713 (IAIIYLLSGVTGNLASAIFLP) form a helical membrane-spanning segment. At 714–715 (YR) the chain is on the lumenal side. The helical transmembrane segment at 716-736 (AEVGPAGSQFGILACLFVELF) threads the bilayer. The Cytoplasmic portion of the chain corresponds to 737–747 (QSWQILARPWR). The helical transmembrane segment at 748-768 (AFFKLLAVVLFLFAFGLLPWI) threads the bilayer. Over 769-773 (DNFAH) the chain is Lumenal. A helical membrane pass occupies residues 774–794 (ISGFVSGLFLSFAFLPYISFG). Residues 795 to 804 (KFDLYRKRCQ) are Cytoplasmic-facing. Residues 805 to 825 (IIIFQAVFLGLLAGLVVLFYF) form a helical membrane-spanning segment. The Lumenal portion of the chain corresponds to 826–856 (YPVRCEWCEFLTCIPFTDKFCEKYELDAQLH).

It belongs to the peptidase S54 family. As to quaternary structure, homodimer, or homooligomer. Interacts with TGFA and HBEGF. Interacts with EGF; may retain EGF in the endoplasmic reticulum and regulates its degradation through the endoplasmic reticulum-associated degradation (ERAD). Interacts (via cytoplasmic N-terminus) with FRMD8/iTAP; this interaction leads to mutual protein stabilization. Interacts with ADAM17/TACE.

It localises to the endoplasmic reticulum membrane. The protein resides in the golgi apparatus membrane. Its function is as follows. Regulates ADAM17 protease, a sheddase of the epidermal growth factor (EGF) receptor ligands and TNF, thereby plays a role in sleep, cell survival, proliferation, migration and inflammation. Does not exhibit any protease activity on its own. The polypeptide is Inactive rhomboid protein 1 (Rhbdf1) (Rattus norvegicus (Rat)).